Here is a 432-residue protein sequence, read N- to C-terminus: Ubiquitin-like modifier-activating enzyme 5 (432 aa).

Residues 25 to 47 (ETKKNQTPSVLKGPTVSQERPSA) form a disordered region. Polar residues predominate over residues 29–44 (NQTPSVLKGPTVSQER). Positions 96, 117, 140, 163, and 196 each coordinate ATP. Residues cysteine 238 and cysteine 241 each contribute to the Zn(2+) site. Cysteine 262 (glycyl thioester intermediate) is an active-site residue. Zn(2+) is bound by residues cysteine 315 and cysteine 320. Residues 363 to 406 (DTTEAPSSSAATEVAPGLKFAYEPTQTPKKNSSDNLKLSPSQAV) are disordered. The segment covering 386–406 (PTQTPKKNSSDNLKLSPSQAV) has biased composition (polar residues).

Belongs to the ubiquitin-activating E1 family. UBA5 subfamily. Interacts with ufc-1.

Its function is as follows. E1-like enzyme which activates ufm-1. Required for interaction between ufm-1 and ufc-1. This Caenorhabditis briggsae protein is Ubiquitin-like modifier-activating enzyme 5.